The primary structure comprises 342 residues: D-erythrose-4-phosphate dehydrogenase (342 aa).

Residue 12–13 participates in NAD(+) binding; that stretch reads RI. Residues 154–156, Arg-200, 213–214, and Arg-236 contribute to the substrate site; these read SCT and TK. Cys-155 (nucleophile) is an active-site residue. Asn-318 serves as a coordination point for NAD(+).

This sequence belongs to the glyceraldehyde-3-phosphate dehydrogenase family. Epd subfamily. As to quaternary structure, homotetramer.

The protein resides in the cytoplasm. It carries out the reaction D-erythrose 4-phosphate + NAD(+) + H2O = 4-phospho-D-erythronate + NADH + 2 H(+). The protein operates within cofactor biosynthesis; pyridoxine 5'-phosphate biosynthesis; pyridoxine 5'-phosphate from D-erythrose 4-phosphate: step 1/5. Functionally, catalyzes the NAD-dependent conversion of D-erythrose 4-phosphate to 4-phosphoerythronate. This Salmonella arizonae (strain ATCC BAA-731 / CDC346-86 / RSK2980) protein is D-erythrose-4-phosphate dehydrogenase.